We begin with the raw amino-acid sequence, 67 residues long: Phycobilisome 7.8 kDa linker polypeptide, allophycocyanin-associated, core (67 aa).

One can recognise a CpcD-like domain in the interval 1–56 (GRLFKITACVPSQTRIRTQRELQNTYFTKLVPYENWFREQQRIQKMGGKIVKVELA).

This sequence belongs to the phycobilisome linker protein family.

The protein localises to the cellular thylakoid membrane. Rod linker protein, associated with allophycocyanin. Linker polypeptides determine the state of aggregation and the location of the disk-shaped phycobiliprotein units within the phycobilisome and modulate their spectroscopic properties in order to mediate a directed and optimal energy transfer. The polypeptide is Phycobilisome 7.8 kDa linker polypeptide, allophycocyanin-associated, core (apcC) (Mastigocladus laminosus (Fischerella sp.)).